A 254-amino-acid chain; its full sequence is Acetyl-coenzyme A carboxylase carboxyl transferase subunit beta (254 aa).

A CoA carboxyltransferase N-terminal domain is found at 1–254; sequence MWLRCPHCHQ…LLKTGSVANE (254 aa). Zn(2+) is bound by residues C5, C8, C23, and C26. The segment at 5-26 adopts a C4-type zinc-finger fold; that stretch reads CPHCHQLLFAKQLTQYAVCPNC.

Belongs to the AccD/PCCB family. Acetyl-CoA carboxylase is a heterohexamer composed of biotin carboxyl carrier protein (AccB), biotin carboxylase (AccC) and two subunits each of ACCase subunit alpha (AccA) and ACCase subunit beta (AccD). The cofactor is Zn(2+).

The protein resides in the cytoplasm. It carries out the reaction N(6)-carboxybiotinyl-L-lysyl-[protein] + acetyl-CoA = N(6)-biotinyl-L-lysyl-[protein] + malonyl-CoA. It functions in the pathway lipid metabolism; malonyl-CoA biosynthesis; malonyl-CoA from acetyl-CoA: step 1/1. Component of the acetyl coenzyme A carboxylase (ACC) complex. Biotin carboxylase (BC) catalyzes the carboxylation of biotin on its carrier protein (BCCP) and then the CO(2) group is transferred by the transcarboxylase to acetyl-CoA to form malonyl-CoA. This is Acetyl-coenzyme A carboxylase carboxyl transferase subunit beta from Limosilactobacillus reuteri (strain DSM 20016) (Lactobacillus reuteri).